The following is a 391-amino-acid chain: Multidrug resistance protein MdtL (391 aa).

Topologically, residues 1-3 (MSR) are cytoplasmic. A helical membrane pass occupies residues 4 to 24 (FLICSFALVLLYPAGIDMYLV). Topologically, residues 25–41 (GLPRIAADLNASEAQLH) are periplasmic. Residues 42–62 (IAFSVYLAGMAAAMLFAGKVA) traverse the membrane as a helical segment. The Cytoplasmic portion of the chain corresponds to 63 to 68 (DRSGRK). Residues 69 to 89 (PVAIPGAALFIITSVFCSLAE) form a helical membrane-spanning segment. Residues 90–92 (TST) are Periplasmic-facing. The chain crosses the membrane as a helical span at residues 93–113 (LFLAGRFLQGLGAGCCYVVAF). The Cytoplasmic segment spans residues 114 to 130 (AILRDTLDDRRRAKVLS). A helical membrane pass occupies residues 131–151 (LLNGITCIIPVLAPVLGHLIM). Topologically, residues 152 to 157 (LKFPWQ) are periplasmic. The helical transmembrane segment at 158–178 (SLFWTMAIMGIAVLMLSLFIL) threads the bilayer. Topologically, residues 179–198 (KETRPAAPAASDKSRENSES) are cytoplasmic. A helical transmembrane segment spans residues 199 to 221 (LLNRFFLSRVVITTLSVSVILTF). Residues 222–244 (VNTSPVLLMEIMGFERGEYATIM) lie on the Periplasmic side of the membrane. A helical transmembrane segment spans residues 245–265 (ALTAGVSMTVSFSTPFALGIF). Residues 266–268 (KPR) are Cytoplasmic-facing. A helical transmembrane segment spans residues 269–289 (TLMITSQVLFLAAGITLTVSP). At 290–292 (SHA) the chain is on the periplasmic side. A helical transmembrane segment spans residues 293–313 (VSLFGITLICAGFSVGFGVAM). At 314-330 (SQALGPFSLRAGVASST) the chain is on the cytoplasmic side. A helical membrane pass occupies residues 331 to 351 (LGIAQVCGSSLWIWLAAVVGI). Residues 352-355 (SAWN) lie on the Periplasmic side of the membrane. Residues 356 to 376 (MLIGILIACSIVSLLLIMFVA) form a helical membrane-spanning segment. Residues 377–391 (PGRPVTAHEEIHHHA) lie on the Cytoplasmic side of the membrane.

The protein belongs to the major facilitator superfamily. DHA1 family. MdtL (TC 2.A.1.2.22) subfamily.

The protein resides in the cell inner membrane. In terms of biological role, confers resistance to chloramphenicol. The sequence is that of Multidrug resistance protein MdtL (mdtL) from Escherichia coli O157:H7.